The following is a 508-amino-acid chain: Photosystem II CP47 reaction center protein (508 aa).

6 helical membrane passes run 21–36 (SVHI…WAGS), 101–115 (IVFS…IWHW), 140–156 (GIHL…FGAF), 203–218 (IAAG…FHLS), 237–252 (VLSS…AFVV), and 457–472 (SFAL…HGAR).

It belongs to the PsbB/PsbC family. PsbB subfamily. In terms of assembly, PSII is composed of 1 copy each of membrane proteins PsbA, PsbB, PsbC, PsbD, PsbE, PsbF, PsbH, PsbI, PsbJ, PsbK, PsbL, PsbM, PsbT, PsbX, PsbY, PsbZ, Psb30/Ycf12, at least 3 peripheral proteins of the oxygen-evolving complex and a large number of cofactors. It forms dimeric complexes. Binds multiple chlorophylls. PSII binds additional chlorophylls, carotenoids and specific lipids. serves as cofactor.

The protein resides in the plastid. It localises to the chloroplast thylakoid membrane. Its function is as follows. One of the components of the core complex of photosystem II (PSII). It binds chlorophyll and helps catalyze the primary light-induced photochemical processes of PSII. PSII is a light-driven water:plastoquinone oxidoreductase, using light energy to abstract electrons from H(2)O, generating O(2) and a proton gradient subsequently used for ATP formation. The chain is Photosystem II CP47 reaction center protein from Carica papaya (Papaya).